The chain runs to 256 residues: Putative cysteine-rich repeat secretory protein 21 (256 aa).

The first 30 residues, 1–30 (MYSSVSKRLVSVHILVVVALQLLFIPNVLS), serve as a signal peptide directing secretion. Gnk2-homologous domains follow at residues 37 to 139 (YLHH…SIDT) and 145 to 253 (YQNN…LYPF).

This sequence belongs to the cysteine-rich repeat secretory protein family.

The protein resides in the secreted. This is Putative cysteine-rich repeat secretory protein 21 (CRRSP21) from Arabidopsis thaliana (Mouse-ear cress).